We begin with the raw amino-acid sequence, 104 residues long: Large ribosomal subunit protein uL24 (104 aa).

Residues isoleucine 85–arginine 96 are compositionally biased toward basic and acidic residues. Residues isoleucine 85 to lysine 104 form a disordered region.

The protein belongs to the universal ribosomal protein uL24 family. As to quaternary structure, part of the 50S ribosomal subunit.

One of two assembly initiator proteins, it binds directly to the 5'-end of the 23S rRNA, where it nucleates assembly of the 50S subunit. Its function is as follows. One of the proteins that surrounds the polypeptide exit tunnel on the outside of the subunit. This Anaeromyxobacter sp. (strain Fw109-5) protein is Large ribosomal subunit protein uL24.